We begin with the raw amino-acid sequence, 239 residues long: Pyridoxine 5'-phosphate synthase (239 aa).

Asn7 serves as a coordination point for 3-amino-2-oxopropyl phosphate. 9–10 (DH) is a binding site for 1-deoxy-D-xylulose 5-phosphate. Residue Arg18 participates in 3-amino-2-oxopropyl phosphate binding. His43 functions as the Proton acceptor in the catalytic mechanism. 1-deoxy-D-xylulose 5-phosphate is bound by residues Arg45 and His50. Residue Glu70 is the Proton acceptor of the active site. Residue Thr100 coordinates 1-deoxy-D-xylulose 5-phosphate. The Proton donor role is filled by His191. 3-amino-2-oxopropyl phosphate-binding positions include Gly192 and 213-214 (GH).

Belongs to the PNP synthase family. In terms of assembly, homooctamer; tetramer of dimers.

The protein resides in the cytoplasm. The enzyme catalyses 3-amino-2-oxopropyl phosphate + 1-deoxy-D-xylulose 5-phosphate = pyridoxine 5'-phosphate + phosphate + 2 H2O + H(+). Its pathway is cofactor biosynthesis; pyridoxine 5'-phosphate biosynthesis; pyridoxine 5'-phosphate from D-erythrose 4-phosphate: step 5/5. Catalyzes the complicated ring closure reaction between the two acyclic compounds 1-deoxy-D-xylulose-5-phosphate (DXP) and 3-amino-2-oxopropyl phosphate (1-amino-acetone-3-phosphate or AAP) to form pyridoxine 5'-phosphate (PNP) and inorganic phosphate. The sequence is that of Pyridoxine 5'-phosphate synthase from Trichlorobacter lovleyi (strain ATCC BAA-1151 / DSM 17278 / SZ) (Geobacter lovleyi).